The chain runs to 275 residues: Shikimate dehydrogenase (NADP(+)) (275 aa).

Shikimate-binding positions include 19–21 (SKS) and Thr66. Lys70 acts as the Proton acceptor in catalysis. Glu82 lines the NADP(+) pocket. Shikimate contacts are provided by Asn91 and Asp106. NADP(+)-binding positions include 130-134 (GAGGA), 154-159 (NRTASK), and Met217. Tyr219 lines the shikimate pocket. Residue Gly241 participates in NADP(+) binding.

Belongs to the shikimate dehydrogenase family. In terms of assembly, homodimer.

It catalyses the reaction shikimate + NADP(+) = 3-dehydroshikimate + NADPH + H(+). The protein operates within metabolic intermediate biosynthesis; chorismate biosynthesis; chorismate from D-erythrose 4-phosphate and phosphoenolpyruvate: step 4/7. Its function is as follows. Involved in the biosynthesis of the chorismate, which leads to the biosynthesis of aromatic amino acids. Catalyzes the reversible NADPH linked reduction of 3-dehydroshikimate (DHSA) to yield shikimate (SA). The chain is Shikimate dehydrogenase (NADP(+)) from Colwellia psychrerythraea (strain 34H / ATCC BAA-681) (Vibrio psychroerythus).